Reading from the N-terminus, the 246-residue chain is Uridylate kinase (246 aa).

Position 13–16 (13–16 (KLSG)) interacts with ATP. Residue glycine 54 participates in UMP binding. ATP contacts are provided by glycine 55 and arginine 59. UMP-binding positions include aspartate 74 and 135-142 (AGMPYFST). ATP is bound by residues asparagine 163, tyrosine 169, and aspartate 172.

The protein belongs to the UMP kinase family. Homohexamer.

Its subcellular location is the cytoplasm. It carries out the reaction UMP + ATP = UDP + ADP. The protein operates within pyrimidine metabolism; CTP biosynthesis via de novo pathway; UDP from UMP (UMPK route): step 1/1. With respect to regulation, inhibited by UTP. Catalyzes the reversible phosphorylation of UMP to UDP. This Bifidobacterium longum (strain NCC 2705) protein is Uridylate kinase.